The primary structure comprises 456 residues: Anthranilate synthase component 1 (456 aa).

L-tryptophan contacts are provided by residues S31 and 244–246 (SYM). 279 to 280 (GT) serves as a coordination point for chorismate. E306 contributes to the Mg(2+) binding site. Chorismate contacts are provided by residues Y394, R414, 428-430 (GAG), and G430. Position 443 (E443) interacts with Mg(2+).

Belongs to the anthranilate synthase component I family. In terms of assembly, heterotetramer consisting of two non-identical subunits: a beta subunit (TrpG) and a large alpha subunit (TrpE). Mg(2+) is required as a cofactor.

It carries out the reaction chorismate + L-glutamine = anthranilate + pyruvate + L-glutamate + H(+). Its pathway is amino-acid biosynthesis; L-tryptophan biosynthesis; L-tryptophan from chorismate: step 1/5. Feedback inhibited by tryptophan. Functionally, part of a heterotetrameric complex that catalyzes the two-step biosynthesis of anthranilate, an intermediate in the biosynthesis of L-tryptophan. In the first step, the glutamine-binding beta subunit (TrpG) of anthranilate synthase (AS) provides the glutamine amidotransferase activity which generates ammonia as a substrate that, along with chorismate, is used in the second step, catalyzed by the large alpha subunit of AS (TrpE) to produce anthranilate. In the absence of TrpG, TrpE can synthesize anthranilate directly from chorismate and high concentrations of ammonia. This Lactococcus lactis subsp. lactis (strain IL1403) (Streptococcus lactis) protein is Anthranilate synthase component 1 (trpE).